Reading from the N-terminus, the 251-residue chain is Triosephosphate isomerase (251 aa).

Residue 9–11 (NWK) coordinates substrate. The active-site Electrophile is the histidine 95. Glutamate 167 acts as the Proton acceptor in catalysis. Substrate contacts are provided by residues glycine 173, serine 212, and 233 to 234 (GG).

It belongs to the triosephosphate isomerase family. Homodimer.

It localises to the cytoplasm. It carries out the reaction D-glyceraldehyde 3-phosphate = dihydroxyacetone phosphate. It functions in the pathway carbohydrate biosynthesis; gluconeogenesis. Its pathway is carbohydrate degradation; glycolysis; D-glyceraldehyde 3-phosphate from glycerone phosphate: step 1/1. Functionally, involved in the gluconeogenesis. Catalyzes stereospecifically the conversion of dihydroxyacetone phosphate (DHAP) to D-glyceraldehyde-3-phosphate (G3P). The sequence is that of Triosephosphate isomerase from Pseudomonas syringae pv. syringae (strain B728a).